The chain runs to 305 residues: Sulfate adenylyltransferase subunit 2 (305 aa).

This sequence belongs to the PAPS reductase family. CysD subfamily. In terms of assembly, heterodimer composed of CysD, the smaller subunit, and CysN.

It catalyses the reaction sulfate + ATP + H(+) = adenosine 5'-phosphosulfate + diphosphate. Its pathway is sulfur metabolism; hydrogen sulfide biosynthesis; sulfite from sulfate: step 1/3. Functionally, with CysN forms the ATP sulfurylase (ATPS) that catalyzes the adenylation of sulfate producing adenosine 5'-phosphosulfate (APS) and diphosphate, the first enzymatic step in sulfur assimilation pathway. APS synthesis involves the formation of a high-energy phosphoric-sulfuric acid anhydride bond driven by GTP hydrolysis by CysN coupled to ATP hydrolysis by CysD. The sequence is that of Sulfate adenylyltransferase subunit 2 from Pseudomonas fluorescens (strain ATCC BAA-477 / NRRL B-23932 / Pf-5).